Consider the following 361-residue polypeptide: RNA-binding protein 4 (361 aa).

RRM domains lie at 2–72 (VKLF…ASKN) and 78–148 (TKLH…LSTS). A Glycyl lysine isopeptide (Lys-Gly) (interchain with G-Cter in SUMO2) cross-link involves residue Lys79. Ser86 carries the post-translational modification Phosphoserine. A CCHC-type zinc finger spans residues 160 to 177 (SGCYRCGKEGHWSKECPI). Positions 196-361 (AVRTPYTMSY…YADRARYSAF (166 aa)) are interaction with TNPO3. Residue Ser306 is modified to Phosphoserine.

Interacts with TNPO3; the interaction mediates nuclear import of the protein and is disrupted by nuclear Ran bound to GTP. Interacts with EIF4G1 and WT1. Interacts with EIF4A1; the interaction is modulated under stress-induced conditions. Interacts with AGO1. Interacts with AGO2; the interaction occurs under both cell proliferation and differentiation conditions and in an RNA- and phosphorylation-independent manner. Interacts with DDX5; the interaction occurs in an RNA-independent manner. Interacts with RBPMS; the interaction allows cooperative assembly of RNA-bound stable cell-specific alternative splicing regulatory complexes. Phosphorylated. Phosphorylated in vitro on Ser-306 by SRPK1. Phosphorylation on Ser-306 is induced upon cell stress signaling, which alters its subcellular localization and may modulate its activity on IRES-mediated mRNA translation. Phosphorylated. Phosphorylation on Ser-306 is induced upon cell muscle differentiation. Expressed in the suprachiasmatic nucleus (SCN). Expressed in myocytes; expression gradually increases during muscle cell differentiation (at protein level). Expressed in the suprachiasmatic nucleus (SCN).

Its subcellular location is the nucleus. The protein resides in the nucleolus. The protein localises to the nucleus speckle. It is found in the cytoplasm. It localises to the cytoplasmic granule. RNA-binding factor involved in multiple aspects of cellular processes like alternative splicing of pre-mRNA and translation regulation. Modulates alternative 5'-splice site and exon selection. Acts as a muscle cell differentiation-promoting factor. Activates exon skipping of the PTB pre-mRNA during muscle cell differentiation. Antagonizes the activity of the splicing factor PTBP1 to modulate muscle cell-specific exon selection of alpha tropomyosin. Binds to intronic pyrimidine-rich sequence of the TPM1 and MAPT pre-mRNAs. Required for the translational activation of PER1 mRNA in response to circadian clock. Binds directly to the 3'-UTR of the PER1 mRNA. Exerts a suppressive activity on Cap-dependent translation via binding to CU-rich responsive elements within the 3'UTR of mRNAs, a process increased under stress conditions or during myocytes differentiation. Recruits EIF4A1 to stimulate IRES-dependent translation initiation in respons to cellular stress. Associates to internal ribosome entry segment (IRES) in target mRNA species under stress conditions. Plays a role for miRNA-guided RNA cleavage and translation suppression by promoting association of AGO2-containing miRNPs with their cognate target mRNAs. Associates with miRNAs during muscle cell differentiation. Binds preferentially to 5'-CGCGCG[GCA]-3' motif in vitro. In Mus musculus (Mouse), this protein is RNA-binding protein 4 (Rbm4).